The sequence spans 234 residues: Glucosamine-6-phosphate deaminase (234 aa).

Asp-63 functions as the Proton acceptor; for enolization step in the catalytic mechanism. The For ring-opening step role is filled by Asn-129. His-131 functions as the Proton acceptor; for ring-opening step in the catalytic mechanism. Glu-136 (for ring-opening step) is an active-site residue.

The protein belongs to the glucosamine/galactosamine-6-phosphate isomerase family. NagB subfamily.

It carries out the reaction alpha-D-glucosamine 6-phosphate + H2O = beta-D-fructose 6-phosphate + NH4(+). Its pathway is amino-sugar metabolism; N-acetylneuraminate degradation; D-fructose 6-phosphate from N-acetylneuraminate: step 5/5. Functionally, catalyzes the reversible isomerization-deamination of glucosamine 6-phosphate (GlcN6P) to form fructose 6-phosphate (Fru6P) and ammonium ion. This is Glucosamine-6-phosphate deaminase from Listeria monocytogenes serovar 1/2a (strain ATCC BAA-679 / EGD-e).